A 161-amino-acid polypeptide reads, in one-letter code: Nucleotide-binding protein PputGB1_4497 (161 aa).

The protein belongs to the YajQ family.

Nucleotide-binding protein. This Pseudomonas putida (strain GB-1) protein is Nucleotide-binding protein PputGB1_4497.